Reading from the N-terminus, the 241-residue chain is DNA protection during starvation protein 2 (241 aa).

A disordered region spans residues 25-65; the sequence is GAQSAGNGVPSTNVNTPAPNTGQSTAQNTNTASPLPYNRAT. Residues 33–57 are compositionally biased toward polar residues; sequence VPSTNVNTPAPNTGQSTAQNTNTAS. The Fe cation site is built by His-100, Asp-127, and Glu-131. Residues 220-229 show a composition bias toward polar residues; it reads TPTDPNTGFD. Residues 220 to 241 are disordered; that stretch reads TPTDPNTGFDINNGKPVPLRGR.

The protein belongs to the Dps family. As to quaternary structure, homododecamer. The 12 subunits form a hollow sphere into which the mineral iron core of up to 500 Fe(3+) can be deposited.

The protein localises to the cytoplasm. The catalysed reaction is 2 Fe(2+) + H2O2 + 2 H(+) = 2 Fe(3+) + 2 H2O. Protects DNA from oxidative damage by sequestering intracellular Fe(2+) ion and storing it in the form of Fe(3+) oxyhydroxide mineral. One hydrogen peroxide oxidizes two Fe(2+) ions, which prevents hydroxyl radical production by the Fenton reaction. In Deinococcus radiodurans (strain ATCC 13939 / DSM 20539 / JCM 16871 / CCUG 27074 / LMG 4051 / NBRC 15346 / NCIMB 9279 / VKM B-1422 / R1), this protein is DNA protection during starvation protein 2 (dps2).